Reading from the N-terminus, the 581-residue chain is Semenogelin-2 (581 aa).

Residues 1–23 form the signal peptide; the sequence is MKSIILFVLSLLLILEKQAAVMG. 4 disordered regions span residues 24-62, 132-157, 173-194, and 271-581; these read QKGG…SKGS, GGKA…GISS, KEQA…QSSY, and NLNQ…PIST. 2 stretches are compositionally biased toward polar residues: residues 138 to 157 and 174 to 194; these read GTQN…GISS and EQAS…QSSY. Residues 291–310 are compositionally biased toward basic and acidic residues; the sequence is HTEERQLNHGEKSVQKDISK. Residues 324–333 are compositionally biased toward polar residues; it reads KSQNQVTIHS. Basic and acidic residues predominate over residues 334–344; it reads QDQEHGHKENK. Residues 366–396 are compositionally biased toward polar residues; it reads KSVSKGSISIQTEEQIHGKSQNQVRIPSQAQ. Composition is skewed to basic and acidic residues over residues 412–425 and 455–464; these read TEER…KDIQ and DQEHGHKENK. Composition is skewed to polar residues over residues 481-497 and 505-529; these read GKNT…SFQT and SQIQ…SGQS. Composition is skewed to basic and acidic residues over residues 530–545 and 558–581; these read ADRE…KGRY and TEHE…PIST.

It belongs to the semenogelin family. As to quaternary structure, interacts with SERPINA5.

It localises to the secreted. In terms of biological role, participates in the formation of a gel matrix (sperm coagulum) entrapping the accessory gland secretions and ejaculated spermatozoa. This is Semenogelin-2 (SEMG2) from Pongo abelii (Sumatran orangutan).